The sequence spans 311 residues: Malate dehydrogenase (311 aa).

Residues 7 to 13 (GAAGGIG) and Asp-34 each bind NAD(+). Substrate is bound by residues Arg-81 and Arg-87. Residues Asn-94 and 117–119 (ITN) each bind NAD(+). Substrate-binding residues include Asn-119 and Arg-153. The active-site Proton acceptor is the His-177. Met-227 contributes to the NAD(+) binding site.

It belongs to the LDH/MDH superfamily. MDH type 1 family. As to quaternary structure, homodimer.

The catalysed reaction is (S)-malate + NAD(+) = oxaloacetate + NADH + H(+). Functionally, catalyzes the reversible oxidation of malate to oxaloacetate. In Pseudoalteromonas atlantica (strain T6c / ATCC BAA-1087), this protein is Malate dehydrogenase.